A 975-amino-acid polypeptide reads, in one-letter code: C-1-tetrahydrofolate synthase, mitochondrial (975 aa).

Residues 1 to 34 (MLSRLSLLSNSRAFQQARWRIYRLKVSPTVHASQ) constitute a mitochondrion transit peptide. The tract at residues 35 to 343 (YHILSGRKLA…KPLPLHLESP (309 aa)) is methylenetetrahydrofolate dehydrogenase and cyclohydrolase. Substrate-binding positions include 83 to 87 (YVRMK) and 130 to 132 (IQL). Residues 201–203 (GRS) and serine 226 contribute to the NADP(+) site. 301-305 (PGGVG) serves as a coordination point for substrate. Residues 344–975 (VPSDIDISRA…DDDGEIEGLF (632 aa)) are formyltetrahydrofolate synthetase. 408 to 415 (TPLGEGKS) is an ATP binding site.

It in the N-terminal section; belongs to the tetrahydrofolate dehydrogenase/cyclohydrolase family. This sequence in the C-terminal section; belongs to the formate--tetrahydrofolate ligase family. In terms of assembly, homodimer.

It localises to the mitochondrion. It catalyses the reaction (6R)-5,10-methylene-5,6,7,8-tetrahydrofolate + NADP(+) = (6R)-5,10-methenyltetrahydrofolate + NADPH. It carries out the reaction (6R)-5,10-methenyltetrahydrofolate + H2O = (6R)-10-formyltetrahydrofolate + H(+). The enzyme catalyses (6S)-5,6,7,8-tetrahydrofolate + formate + ATP = (6R)-10-formyltetrahydrofolate + ADP + phosphate. The protein operates within one-carbon metabolism; tetrahydrofolate interconversion. Mitochondrial isozyme of C-1-tetrahydrofolate synthase. The trifunctional enzyme catalyzes the interconversion of the one-carbon derivatives of tetrahydrofolate (THF) between different oxidation states by the enzymatic activities 10-formyltetrahydrofolate synthetase, 5,lO-methenyltetrahydrofolate cyclohydrolase, and 5,lO-methylenetetrahydrofolate dehydrogenase. The chain is C-1-tetrahydrofolate synthase, mitochondrial from Saccharomyces cerevisiae (strain ATCC 204508 / S288c) (Baker's yeast).